Reading from the N-terminus, the 220-residue chain is Deoxyribose-phosphate aldolase 2 (220 aa).

Aspartate 89 (proton donor/acceptor) is an active-site residue. Lysine 151 serves as the catalytic Schiff-base intermediate with acetaldehyde. Lysine 180 functions as the Proton donor/acceptor in the catalytic mechanism.

It belongs to the DeoC/FbaB aldolase family. DeoC type 1 subfamily.

It localises to the cytoplasm. The catalysed reaction is 2-deoxy-D-ribose 5-phosphate = D-glyceraldehyde 3-phosphate + acetaldehyde. Its pathway is carbohydrate degradation; 2-deoxy-D-ribose 1-phosphate degradation; D-glyceraldehyde 3-phosphate and acetaldehyde from 2-deoxy-alpha-D-ribose 1-phosphate: step 2/2. Its function is as follows. Catalyzes a reversible aldol reaction between acetaldehyde and D-glyceraldehyde 3-phosphate to generate 2-deoxy-D-ribose 5-phosphate. The polypeptide is Deoxyribose-phosphate aldolase 2 (Staphylococcus aureus (strain COL)).